A 90-amino-acid polypeptide reads, in one-letter code: Small ribosomal subunit protein bS20 (90 aa).

The protein belongs to the bacterial ribosomal protein bS20 family.

Functionally, binds directly to 16S ribosomal RNA. The chain is Small ribosomal subunit protein bS20 from Francisella tularensis subsp. tularensis (strain FSC 198).